The chain runs to 316 residues: ATP synthase gamma chain (316 aa).

Belongs to the ATPase gamma chain family. F-type ATPases have 2 components, CF(1) - the catalytic core - and CF(0) - the membrane proton channel. CF(1) has five subunits: alpha(3), beta(3), gamma(1), delta(1), epsilon(1). CF(0) has three main subunits: a, b and c.

The protein resides in the cellular thylakoid membrane. Its function is as follows. Produces ATP from ADP in the presence of a proton gradient across the membrane. The gamma chain is believed to be important in regulating ATPase activity and the flow of protons through the CF(0) complex. In Prochlorococcus marinus (strain MIT 9312), this protein is ATP synthase gamma chain.